Here is a 504-residue protein sequence, read N- to C-terminus: Probable phenylalanine--tRNA ligase beta subunit (504 aa).

The B5 domain maps to 270 to 346 (IKDKSYLLSI…ICYGFNNINM (77 aa)). Positions 324, 330, 333, and 334 each coordinate Mg(2+).

The protein belongs to the phenylalanyl-tRNA synthetase beta subunit family. Type 2 subfamily. Tetramer of two alpha and two beta subunits. It depends on Mg(2+) as a cofactor.

It is found in the cytoplasm. The catalysed reaction is tRNA(Phe) + L-phenylalanine + ATP = L-phenylalanyl-tRNA(Phe) + AMP + diphosphate + H(+). The polypeptide is Probable phenylalanine--tRNA ligase beta subunit (Vairimorpha ceranae (strain BRL01) (Microsporidian parasite)).